A 198-amino-acid chain; its full sequence is Secreted RxLR effector protein PITG_22926 (198 aa).

The signal sequence occupies residues 1-20 (MLRSFLLIVATVSLFGQCKP). Residues 43-52 (RFLRTNDEER) carry the RxLR-dEER motif.

This sequence belongs to the RxLR effector family. As to quaternary structure, interacts with host MAP3Kbeta2 in the nucleoplasm.

Its subcellular location is the secreted. It localises to the host nucleus. The protein resides in the host nucleolus. Secreted effector that promotes P.infestans colonization of plant host. Specifically suppresses Avr4/Cf4- and AvrPto/Pto-triggered cell death. Targets the potato MAP3Kbeta2 kinase, a positive regulator of cell death associated with plant immunity, and perturbs signaling pathways triggered by MAP3Kbeta2. The polypeptide is Secreted RxLR effector protein PITG_22926 (Phytophthora infestans (strain T30-4) (Potato late blight agent)).